Here is a 35-residue protein sequence, read N- to C-terminus: MSDIN-like toxin proprotein 6 (35 aa).

Residues 1–10 (MSDINGTRLP) constitute a propeptide that is removed on maturation. The cyclopeptide (Ile-Pro) cross-link spans 11–20 (IPGLIPLGIP). A propeptide spanning residues 21-35 (CVSDDVNPTLTRGER) is cleaved from the precursor.

The protein belongs to the MSDIN fungal toxin family. Processed by the macrocyclase-peptidase enzyme POPB to yield a toxic cyclic decapeptide. POPB first removes 10 residues from the N-terminus. Conformational trapping of the remaining peptide forces the enzyme to release this intermediate rather than proceed to macrocyclization. The enzyme rebinds the remaining peptide in a different conformation and catalyzes macrocyclization of the N-terminal 10 residues.

Its function is as follows. Probable toxin that belongs to the MSDIN-like toxin family responsible for a large number of food poisoning cases and deaths. This chain is MSDIN-like toxin proprotein 6, found in Amanita bisporigera (Destroying angel).